The sequence spans 439 residues: MRRISSRLSLVLFAALSCATALFPAHAANPRSVEVDHIAAVVNNEVITARELRERVEQAIHQLNRQGTPQPPADVLERQLLERLVLERAQLQLARETSLQVDEATLERAIARIAESNRLTIAQLQAALEKDGVSWSRFRDNIRTEILLTRLREREVDNRIVVTDAEVDNFLANNADALSGEEFELAHILIRVPEAATQQQMAGLVARAETAKQRLNSGDDFARVAASYSDAPDAMNGGALGWRSRDRLPPLFAEAVRELSPGSVSPVLRSSAGLHIVKLLDRRGGAAAGPQQLEQTRARHILIRTSEILNDSEAESRLLGLRERVVNGASFAELAKAHSADLSSAKGGDLGWLSPGDTVPEFERTMNALKPGEVSAPVRSPFGWHLIQVEARRLQDVSDERKRNAARNALRERKADEAFEDWLRQLRDRTYVEYRTGKE.

An N-terminal signal peptide occupies residues 1–27 (MRRISSRLSLVLFAALSCATALFPAHA). PpiC domains lie at 180–281 (GEEF…KLLD) and 293–391 (LEQT…QVEA).

The protein localises to the periplasm. The catalysed reaction is [protein]-peptidylproline (omega=180) = [protein]-peptidylproline (omega=0). Its function is as follows. Chaperone involved in the correct folding and assembly of outer membrane proteins. Recognizes specific patterns of aromatic residues and the orientation of their side chains, which are found more frequently in integral outer membrane proteins. May act in both early periplasmic and late outer membrane-associated steps of protein maturation. This chain is Chaperone SurA, found in Aromatoleum aromaticum (strain DSM 19018 / LMG 30748 / EbN1) (Azoarcus sp. (strain EbN1)).